We begin with the raw amino-acid sequence, 264 residues long: Complement C1q tumor necrosis factor-related protein 6 (264 aa).

A signal peptide spans 1 to 24 (MRVIMGIASLGFLWAVFLLPLVFG). Asparagine 77 carries an N-linked (GlcNAc...) asparagine glycan. Positions 81–125 (LKGDKGDRGPTGTPGKPGKNGTRGDRGSQGVKGDKGQAGSPGSSC) are disordered. One can recognise a Collagen-like domain in the interval 83–124 (GDKGDRGPTGTPGKPGKNGTRGDRGSQGVKGDKGQAGSPGSS). The segment covering 90–100 (PTGTPGKPGKN) has biased composition (low complexity). One can recognise a C1q domain in the interval 125 to 264 (CQTHYSAFSV…SGHLIKAEDN (140 aa)).

The protein resides in the secreted. The chain is Complement C1q tumor necrosis factor-related protein 6 (C1qtnf6) from Mus musculus (Mouse).